Here is a 339-residue protein sequence, read N- to C-terminus: MLDERKLEVLRAIVEDFVSTNEPVGSKALVERHHLKVSPATVRNDMAALEDEGYIVQPHTSAGRVPTKKGYRLFVDRLSTIKPLSVAERRAIEHFLAGAVDLDDVISRTVRLLAQLTRQVAVVQYPTLDRSAVRHLELIRLSGTRVLLVVITDTGRVEQRQIDLPGELEETDTAELRNRLNAAIAGKRVVDVPDLLATFADGEPPARRSAATAIVSAVLDALVIRRDERVVVGGAANLARFPTDFPESVQPVLEALEEQVVLIRLLGEATRPSEVLVRIGEEDVHEGLRSTAVVSSAYGSKGRALASLGVVGPMRMDYPTTMAAVAAVARYVGRILAEN.

This sequence belongs to the HrcA family.

Its function is as follows. Negative regulator of class I heat shock genes (grpE-dnaK-dnaJ and groELS operons). Prevents heat-shock induction of these operons. The protein is Heat-inducible transcription repressor HrcA of Acidothermus cellulolyticus (strain ATCC 43068 / DSM 8971 / 11B).